Here is a 66-residue protein sequence, read N- to C-terminus: Toxin Boma6b (66 aa).

The 63-residue stretch at 2 to 64 folds into the LCN-type CS-alpha/beta domain; that stretch reads RDAYIAQNYN…VPIKVEGKCH (63 aa). Intrachain disulfides connect Cys12–Cys63, Cys16–Cys36, Cys22–Cys46, and Cys26–Cys48.

It belongs to the long (4 C-C) scorpion toxin superfamily. Sodium channel inhibitor family. Alpha subfamily. In terms of tissue distribution, expressed by the venom gland.

It is found in the secreted. Alpha toxins bind voltage-independently at site-3 of sodium channels (Nav) and inhibit the inactivation of the activated channels, thereby blocking neuronal transmission. The sequence is that of Toxin Boma6b from Buthus occitanus mardochei (Moroccan scorpion).